Reading from the N-terminus, the 289-residue chain is Cyclin-dependent kinase 2 homolog (289 aa).

The region spanning 4–285 (YHGLEKIGEG…AKQAIEHPYF (282 aa)) is the Protein kinase domain. ATP is bound by residues 10 to 18 (IGEGTYGVV) and Lys32. Phosphothreonine is present on Thr14. Tyr15 carries the post-translational modification Phosphotyrosine. Asp126 serves as the catalytic Proton acceptor. Thr159 is modified (phosphothreonine).

It belongs to the protein kinase superfamily. CMGC Ser/Thr protein kinase family. CDC2/CDKX subfamily. May form a complex composed of at least the catalytic subunit CRK2 and a cyclin. Requires Mg(2+) as cofactor.

Its subcellular location is the cytoplasm. It carries out the reaction L-seryl-[protein] + ATP = O-phospho-L-seryl-[protein] + ADP + H(+). The enzyme catalyses L-threonyl-[protein] + ATP = O-phospho-L-threonyl-[protein] + ADP + H(+). The catalysed reaction is [DNA-directed RNA polymerase] + ATP = phospho-[DNA-directed RNA polymerase] + ADP + H(+). With respect to regulation, phosphorylation at Thr-14 or Tyr-15 inactivates the enzyme, while phosphorylation at Thr-159 activates it. Functionally, serine/threonine-protein kinase. Involved in the control of the cell cycle. Required for entry into S-phase and mitosis. Probable component of the kinase complex that phosphorylates the repetitive C-terminus of RNA polymerase II. The protein is Cyclin-dependent kinase 2 homolog of Plasmodium yoelii yoelii.